The following is a 573-amino-acid chain: MFKSQLRTATARSSFRSLASKLNPQRFNSSKTPLLNATRGSNRSKNSLIALAISLSAVSSSYYLYQKDKFISADVPHWKDIELTPEIVSQHNKKDDLWVVLNGQVYDLTDFLPNHPGGQKIIIRYAGKDATKIFVPIHPPDTIEKFIPPEKHLGPLVGEFEQEEEELSDEEIDRLERIERKPPLSQMINLHDFETIARQILPPPALAYYCSAADDEVTLRENHNAYHRIFFNPKILIDVKDVDISTEFFGEKTSAPFYISATALAKLGHPEGEVAIAKGAGREDVVQMISTLASCSFDEIADARIPGQQQWYQLYVNADRSITEKAVRHAEERGMKGLFITVDAPSLGRREKDMKMKFEADSDVQGDDEDIDRSQGASRALSSFIDPSLSWKDIAFIKSITKMPIVIKGVQRKEDVLLAAEHGLQGVVLSNHGGRQLDYTRAPVEVLAEVMPILKERGLDQKIDIFVDGGVRRGTDVLKALCLGAKGVGLGRPFLYAMSSYGDKGVTKAIQLLKDEIEMNMRLLGVNKIEELTPELLDTRSIHNRAVPVAKDYLYEQNYQRMSGAEFRPGIED.

A mitochondrion-targeting transit peptide spans 1–73 (MFKSQLRTAT…LYQKDKFISA (73 aa)). The Cytochrome b5 heme-binding domain maps to 80 to 157 (DIELTPEIVS…PPEKHLGPLV (78 aa)). The heme b site is built by H115, H138, and Y208. One can recognise an FMN hydroxy acid dehydrogenase domain in the interval 182–542 (PPLSQMINLH…TPELLDTRSI (361 aa)). Residue Y208 coordinates pyruvate. FMN contacts are provided by residues 260–263 (SATA), S290, and Q313. Y315 is a pyruvate binding site. Residue T341 participates in FMN binding. Residue K357 participates in heme b binding. K408 serves as a coordination point for FMN. Residues H432 and R435 each coordinate pyruvate. Residues 468 to 472 (DGGVR) and 491 to 492 (GR) contribute to the FMN site.

The protein in the N-terminal section; belongs to the cytochrome b5 family. In the C-terminal section; belongs to the FMN-dependent alpha-hydroxy acid dehydrogenase family. In terms of assembly, homotetramer. Requires FMN as cofactor. It depends on heme b as a cofactor.

The protein localises to the mitochondrion intermembrane space. The catalysed reaction is (S)-lactate + 2 Fe(III)-[cytochrome c] = 2 Fe(II)-[cytochrome c] + pyruvate + 2 H(+). Catalyzes the oxidation of (S)-lactate (L-lactate) to pyruvate with subsequent transfer of electrons to cytochrome c. Is involved in the utilization of (S)-lactate as a sole source of carbon for growth. The polypeptide is L-lactate dehydrogenase (cytochrome) (CYB2) (Wickerhamomyces anomalus (Yeast)).